Here is a 322-residue protein sequence, read N- to C-terminus: HPr kinase/phosphorylase (322 aa).

Active-site residues include His-146 and Lys-167. 161–168 serves as a coordination point for ATP; that stretch reads GDSGLGKS. Position 168 (Ser-168) interacts with Mg(2+). Asp-185 functions as the Proton acceptor; for phosphorylation activity. Proton donor; for dephosphorylation activity in the catalytic mechanism. The important for the catalytic mechanism of both phosphorylation and dephosphorylation stretch occupies residues 209 to 218; that stretch reads LEVRGLGLLD. Position 210 (Glu-210) interacts with Mg(2+). Arg-250 is an active-site residue. Residues 271-276 are important for the catalytic mechanism of dephosphorylation; sequence QVAAGR.

Belongs to the HPrK/P family. Homohexamer. The cofactor is Mg(2+).

The catalysed reaction is [HPr protein]-L-serine + ATP = [HPr protein]-O-phospho-L-serine + ADP + H(+). It carries out the reaction [HPr protein]-O-phospho-L-serine + phosphate + H(+) = [HPr protein]-L-serine + diphosphate. In terms of biological role, catalyzes the ATP- as well as the pyrophosphate-dependent phosphorylation of a specific serine residue in HPr, a phosphocarrier protein of the phosphoenolpyruvate-dependent sugar phosphotransferase system (PTS). HprK/P also catalyzes the pyrophosphate-producing, inorganic phosphate-dependent dephosphorylation (phosphorolysis) of seryl-phosphorylated HPr (P-Ser-HPr). The chain is HPr kinase/phosphorylase from Burkholderia lata (strain ATCC 17760 / DSM 23089 / LMG 22485 / NCIMB 9086 / R18194 / 383).